A 450-amino-acid chain; its full sequence is ATP-dependent protease ATPase subunit HslU (450 aa).

ATP contacts are provided by residues Val29, 71 to 76 (GVGKTE), Asp261, Glu328, and Arg400.

It belongs to the ClpX chaperone family. HslU subfamily. A double ring-shaped homohexamer of HslV is capped on each side by a ring-shaped HslU homohexamer. The assembly of the HslU/HslV complex is dependent on binding of ATP.

Its subcellular location is the cytoplasm. In terms of biological role, ATPase subunit of a proteasome-like degradation complex; this subunit has chaperone activity. The binding of ATP and its subsequent hydrolysis by HslU are essential for unfolding of protein substrates subsequently hydrolyzed by HslV. HslU recognizes the N-terminal part of its protein substrates and unfolds these before they are guided to HslV for hydrolysis. In Rickettsia conorii (strain ATCC VR-613 / Malish 7), this protein is ATP-dependent protease ATPase subunit HslU.